The sequence spans 564 residues: Membrane protein insertase YidC (564 aa).

A helical membrane pass occupies residues 7-24 (VLWVVFSFSLLMLWDNYN). A compositionally biased stretch (low complexity) spans 43–60 (KPAAATDDGKTAAAPTAD). The segment at 43–76 (KPAAATDDGKTAAAPTADVPTSSAHAANATGVPD) is disordered. 6 helical membrane passes run 293 to 313 (LATNLYAVGAIMPMGAVAPGA), 341 to 361 (VKDYGWLTIIAKPIFWLMIQI), 364 to 384 (LLGNWGWTIVVLTIVIKLAFF), 438 to 458 (MPIVIQIPVFISLYWVLLASV), 483 to 503 (IGSFHLTIGILPILMAISMFI), and 524 to 544 (PIAFSLMFFFFPAGLVLYWVV).

It belongs to the OXA1/ALB3/YidC family. Type 1 subfamily. In terms of assembly, interacts with the Sec translocase complex via SecD. Specifically interacts with transmembrane segments of nascent integral membrane proteins during membrane integration.

It localises to the cell inner membrane. Required for the insertion and/or proper folding and/or complex formation of integral membrane proteins into the membrane. Involved in integration of membrane proteins that insert both dependently and independently of the Sec translocase complex, as well as at least some lipoproteins. Aids folding of multispanning membrane proteins. The polypeptide is Membrane protein insertase YidC (Janthinobacterium sp. (strain Marseille) (Minibacterium massiliensis)).